The chain runs to 551 residues: Protein ROOT HAIR SPECIFIC 17 (551 aa).

Residues 39-59 (LFPLVSAVSGCLLLILFSFST) traverse the membrane as a helical; Signal-anchor for type II membrane protein segment. N109 and N153 each carry an N-linked (GlcNAc...) asparagine glycan. 293–295 (HLR) contributes to the substrate binding site. Residues N405 and N465 are each glycosylated (N-linked (GlcNAc...) asparagine). Residues 515–539 (KAKHVNEDDSSEYSEIGNVPISSRS) form a disordered region.

The protein belongs to the glycosyltransferase GT106 family. As to expression, specifically expressed in the root hair.

Its subcellular location is the membrane. It functions in the pathway glycan metabolism. The chain is Protein ROOT HAIR SPECIFIC 17 from Arabidopsis thaliana (Mouse-ear cress).